The primary structure comprises 1098 residues: Platelet-derived growth factor receptor beta (1098 aa).

Positions 1–31 (MGLPGVIPALVLRGQLLLSVLWLLGPQTSRG) are cleaved as a signal peptide. Residues 32-531 (LVITPPGPEF…VVPHSLPFKV (500 aa)) are Extracellular-facing. Ig-like C2-type domains are found at residues 33-119 (VITP…YIFV), 128-209 (PMDS…YSLQ), 213-308 (INVS…INIS), 330-402 (HRSR…HEDD), and 415-523 (PVRV…VTVV). Asparagine 44, asparagine 88, and asparagine 102 each carry an N-linked (GlcNAc...) asparagine glycan. A disulfide bridge connects residues cysteine 53 and cysteine 99. A disulfide bridge links cysteine 148 with cysteine 189. A glycan (N-linked (GlcNAc...) asparagine) is linked at asparagine 214. Cysteines 234 and 290 form a disulfide. 7 N-linked (GlcNAc...) asparagine glycosylation sites follow: asparagine 291, asparagine 306, asparagine 353, asparagine 370, asparagine 444, asparagine 467, and asparagine 478. Cysteine 435 and cysteine 507 form a disulfide bridge. A helical membrane pass occupies residues 532-552 (VVISAILALVVLTVISLIILI). Residues 553-1098 (MLWQKKPRYE…PLAEAEDSFL (546 aa)) lie on the Cytoplasmic side of the membrane. Residues tyrosine 561, tyrosine 578, and tyrosine 580 each carry the phosphotyrosine; by autocatalysis modification. The Protein kinase domain occupies 599 to 961 (LVLGRTLGSG…QLVLLLERLL (363 aa)). ATP-binding positions include 605-613 (LGSGAFGQV) and lysine 633. Phosphotyrosine; by ABL1 and ABL2 is present on tyrosine 685. Phosphotyrosine; by autocatalysis is present on residues tyrosine 715, tyrosine 739, tyrosine 750, tyrosine 762, tyrosine 770, tyrosine 774, and tyrosine 777. Aspartate 825 (proton acceptor) is an active-site residue. Position 856 is a phosphotyrosine; by autocatalysis (tyrosine 856). A phosphotyrosine; by ABL1 and ABL2 mark is found at tyrosine 933 and tyrosine 969. Phosphotyrosine; by autocatalysis is present on residues tyrosine 1008 and tyrosine 1020. Positions 1016–1098 (SDNDYIIPLP…PLAEAEDSFL (83 aa)) are disordered. Positions 1042–1059 (SLASSTLNEVNTSSTISC) are enriched in polar residues. The segment covering 1062–1082 (PLELQEEPQQAEPEAQLEQPQ) has biased composition (low complexity).

It belongs to the protein kinase superfamily. Tyr protein kinase family. CSF-1/PDGF receptor subfamily. As to quaternary structure, interacts with homodimeric PDGFB and PDGFD, and with heterodimers formed by PDGFA and PDGFB. May also interact with homodimeric PDGFC. Monomer in the absence of bound ligand. Interaction with homodimeric PDGFB, heterodimers formed by PDGFA and PDGFB or homodimeric PDGFD, leads to receptor dimerization, where both PDGFRA homodimers and heterodimers with PDGFRB are observed. Interacts with SH2B2/APS. Interacts directly (tyrosine phosphorylated) with SHB. Interacts (tyrosine phosphorylated) with PIK3R1 and RASA1. Interacts (tyrosine phosphorylated) with CBL. Interacts (tyrosine phosphorylated) with SRC and SRC family kinases. Interacts (tyrosine phosphorylated) with PIK3C2B, maybe indirectly. Interacts (tyrosine phosphorylated) with SHC1, GRB7, GRB10 and NCK1. Interaction with GRB2 is mediated by SHC1. Interacts (via C-terminus) with NHERF1. Autophosphorylated on tyrosine residues upon ligand binding. Autophosphorylation occurs in trans, i.e. one subunit of the dimeric receptor phosphorylates tyrosine residues on the other subunit. Phosphorylation at Tyr-578, and to a lesser degree, Tyr-580 is important for interaction with SRC. Phosphorylation at Tyr-715 is important for interaction with GRB2. Phosphorylation at Tyr-739 and Tyr-750 is important for interaction with PIK3R1. Phosphorylation at Tyr-750 is important for interaction with NCK1. Phosphorylation at Tyr-770 and Tyr-856 is important for interaction with RASA1/GAP. Phosphorylation at Tyr-856 is important for efficient phosphorylation of PLCG1 and PTPN11, resulting in increased phosphorylation of AKT1, MAPK1/ERK2 and/or MAPK3/ERK1, PDCD6IP/ALIX and STAM, and in increased cell proliferation. Phosphorylation at Tyr-1008 is important for interaction with PTPN11. Phosphorylation at Tyr-1008 and Tyr-1020 is important for interaction with PLCG1. Dephosphorylated by PTPRJ at Tyr-750, Tyr-856, Tyr-1008 and Tyr-1020. Dephosphorylated by PTPN2 at Tyr-578 and Tyr-1020. In terms of processing, N-glycosylated. Post-translationally, ubiquitinated. After autophosphorylation, the receptor is polyubiquitinated, leading to its degradation. As to expression, weakly expressed in glomerular mesangial cells and interstitial cells. Up-regulated in areas of renal fibrosis. In mice with unilateral ureteral obstruction, increased expression in interstitial cells at day 4 and expression is markedly elevated at day 7 and is maximal at day 14.

It localises to the cell membrane. Its subcellular location is the cytoplasmic vesicle. The protein localises to the lysosome lumen. It carries out the reaction L-tyrosyl-[protein] + ATP = O-phospho-L-tyrosyl-[protein] + ADP + H(+). With respect to regulation, present in an inactive conformation in the absence of bound ligand. Binding of PDGFB and/or PDGFD leads to dimerization and activation by autophosphorylation on tyrosine residues. Tyrosine-protein kinase that acts as a cell-surface receptor for homodimeric PDGFB and PDGFD and for heterodimers formed by PDGFA and PDGFB, and plays an essential role in the regulation of embryonic development, cell proliferation, survival, differentiation, chemotaxis and migration. Plays an essential role in blood vessel development by promoting proliferation, migration and recruitment of pericytes and smooth muscle cells to endothelial cells. Plays a role in the migration of vascular smooth muscle cells and the formation of neointima at vascular injury sites. Required for normal development of the cardiovascular system. Required for normal recruitment of pericytes (mesangial cells) in the kidney glomerulus, and for normal formation of a branched network of capillaries in kidney glomeruli. Promotes rearrangement of the actin cytoskeleton and the formation of membrane ruffles. Binding of its cognate ligands - homodimeric PDGFB, heterodimers formed by PDGFA and PDGFB or homodimeric PDGFD -leads to the activation of several signaling cascades; the response depends on the nature of the bound ligand and is modulated by the formation of heterodimers between PDGFRA and PDGFRB. Phosphorylates PLCG1, PIK3R1, PTPN11, RASA1/GAP, CBL, SHC1 and NCK1. Activation of PLCG1 leads to the production of the cellular signaling molecules diacylglycerol and inositol 1,4,5-trisphosphate, mobilization of cytosolic Ca(2+) and the activation of protein kinase C. Phosphorylation of PIK3R1, the regulatory subunit of phosphatidylinositol 3-kinase, leads to the activation of the AKT1 signaling pathway. Phosphorylation of SHC1, or of the C-terminus of PTPN11, creates a binding site for GRB2, resulting in the activation of HRAS, RAF1 and down-stream MAP kinases, including MAPK1/ERK2 and/or MAPK3/ERK1. Promotes phosphorylation and activation of SRC family kinases. Promotes phosphorylation of PDCD6IP/ALIX and STAM. Receptor signaling is down-regulated by protein phosphatases that dephosphorylate the receptor and its down-stream effectors, and by rapid internalization of the activated receptor. This chain is Platelet-derived growth factor receptor beta (Pdgfrb), found in Mus musculus (Mouse).